The chain runs to 398 residues: 4-hydroxy-3-methylbut-2-enyl diphosphate reductase (398 aa).

Position 66 (Cys66) interacts with [4Fe-4S] cluster. His96 contacts (2E)-4-hydroxy-3-methylbut-2-enyl diphosphate. Position 96 (His96) interacts with dimethylallyl diphosphate. His96 serves as a coordination point for isopentenyl diphosphate. Cys157 contributes to the [4Fe-4S] cluster binding site. (2E)-4-hydroxy-3-methylbut-2-enyl diphosphate is bound at residue His185. Position 185 (His185) interacts with dimethylallyl diphosphate. His185 provides a ligand contact to isopentenyl diphosphate. Residue Glu187 is the Proton donor of the active site. Residue Thr250 coordinates (2E)-4-hydroxy-3-methylbut-2-enyl diphosphate. Cys288 serves as a coordination point for [4Fe-4S] cluster. Positions 317, 318, 319, and 380 each coordinate (2E)-4-hydroxy-3-methylbut-2-enyl diphosphate. Ser317, Ser318, Asn319, and Ser380 together coordinate dimethylallyl diphosphate. The isopentenyl diphosphate site is built by Ser317, Ser318, Asn319, and Ser380.

This sequence belongs to the IspH family. Requires [4Fe-4S] cluster as cofactor.

It carries out the reaction isopentenyl diphosphate + 2 oxidized [2Fe-2S]-[ferredoxin] + H2O = (2E)-4-hydroxy-3-methylbut-2-enyl diphosphate + 2 reduced [2Fe-2S]-[ferredoxin] + 2 H(+). The catalysed reaction is dimethylallyl diphosphate + 2 oxidized [2Fe-2S]-[ferredoxin] + H2O = (2E)-4-hydroxy-3-methylbut-2-enyl diphosphate + 2 reduced [2Fe-2S]-[ferredoxin] + 2 H(+). It functions in the pathway isoprenoid biosynthesis; dimethylallyl diphosphate biosynthesis; dimethylallyl diphosphate from (2E)-4-hydroxy-3-methylbutenyl diphosphate: step 1/1. The protein operates within isoprenoid biosynthesis; isopentenyl diphosphate biosynthesis via DXP pathway; isopentenyl diphosphate from 1-deoxy-D-xylulose 5-phosphate: step 6/6. In terms of biological role, catalyzes the conversion of 1-hydroxy-2-methyl-2-(E)-butenyl 4-diphosphate (HMBPP) into a mixture of isopentenyl diphosphate (IPP) and dimethylallyl diphosphate (DMAPP). Acts in the terminal step of the DOXP/MEP pathway for isoprenoid precursor biosynthesis. The chain is 4-hydroxy-3-methylbut-2-enyl diphosphate reductase from Prochlorococcus marinus subsp. pastoris (strain CCMP1986 / NIES-2087 / MED4).